Reading from the N-terminus, the 115-residue chain is Large ribosomal subunit protein bL19 (115 aa).

It belongs to the bacterial ribosomal protein bL19 family.

In terms of biological role, this protein is located at the 30S-50S ribosomal subunit interface and may play a role in the structure and function of the aminoacyl-tRNA binding site. This chain is Large ribosomal subunit protein bL19, found in Buchnera aphidicola subsp. Acyrthosiphon pisum (strain Tuc7).